The chain runs to 242 residues: Uridylate kinase (242 aa).

Residue 12-15 (KLSG) coordinates ATP. An involved in allosteric activation by GTP region spans residues 20–25 (GNDGFG). Residue Gly-54 participates in UMP binding. Positions 55 and 59 each coordinate ATP. UMP contacts are provided by residues Asp-74 and 135–142 (TGNPYFST). Residues Asn-163, Tyr-169, and Asp-172 each contribute to the ATP site.

It belongs to the UMP kinase family. As to quaternary structure, homohexamer.

It is found in the cytoplasm. The catalysed reaction is UMP + ATP = UDP + ADP. It functions in the pathway pyrimidine metabolism; CTP biosynthesis via de novo pathway; UDP from UMP (UMPK route): step 1/1. Its activity is regulated as follows. Allosterically activated by GTP. Inhibited by UTP. In terms of biological role, catalyzes the reversible phosphorylation of UMP to UDP. The chain is Uridylate kinase from Listeria innocua serovar 6a (strain ATCC BAA-680 / CLIP 11262).